We begin with the raw amino-acid sequence, 172 residues long: Bifunctional protein PyrR (172 aa).

The PRPP-binding signature appears at 90-102 (LVLIDDVLMSGRT).

Belongs to the purine/pyrimidine phosphoribosyltransferase family. PyrR subfamily.

It catalyses the reaction UMP + diphosphate = 5-phospho-alpha-D-ribose 1-diphosphate + uracil. Its function is as follows. Regulates the transcription of the pyrimidine nucleotide (pyr) operon in response to exogenous pyrimidines. Functionally, also displays a weak uracil phosphoribosyltransferase activity which is not physiologically significant. This Pseudomonas putida (strain W619) protein is Bifunctional protein PyrR.